Here is a 291-residue protein sequence, read N- to C-terminus: ATP synthase gamma chain (291 aa).

This sequence belongs to the ATPase gamma chain family. In terms of assembly, F-type ATPases have 2 components, CF(1) - the catalytic core - and CF(0) - the membrane proton channel. CF(1) has five subunits: alpha(3), beta(3), gamma(1), delta(1), epsilon(1). CF(0) has three main subunits: a, b and c.

Its subcellular location is the cell inner membrane. In terms of biological role, produces ATP from ADP in the presence of a proton gradient across the membrane. The gamma chain is believed to be important in regulating ATPase activity and the flow of protons through the CF(0) complex. This chain is ATP synthase gamma chain, found in Caulobacter vibrioides (strain NA1000 / CB15N) (Caulobacter crescentus).